Reading from the N-terminus, the 133-residue chain is UPF0102 protein ABSDF1354 (133 aa).

This sequence belongs to the UPF0102 family.

In Acinetobacter baumannii (strain SDF), this protein is UPF0102 protein ABSDF1354.